We begin with the raw amino-acid sequence, 204 residues long: HTH-type transcriptional repressor KstR (204 aa).

One can recognise an HTH tetR-type domain in the interval 18 to 78; that stretch reads RERRKRILDA…SALGREFERI (61 aa). A DNA-binding region (H-T-H motif) is located at residues 41–60; it reads QMRAVAERADVAVGTLYRYF.

In terms of assembly, homodimer.

In terms of biological role, controls the expression of genes used for utilizing diverse lipids as energy sources. This chain is HTH-type transcriptional repressor KstR (kstR), found in Mycolicibacterium smegmatis (strain ATCC 700084 / mc(2)155) (Mycobacterium smegmatis).